A 242-amino-acid polypeptide reads, in one-letter code: tRNA1(Val) (adenine(37)-N6)-methyltransferase (242 aa).

It belongs to the methyltransferase superfamily. tRNA (adenine-N(6)-)-methyltransferase family.

Its subcellular location is the cytoplasm. It catalyses the reaction adenosine(37) in tRNA1(Val) + S-adenosyl-L-methionine = N(6)-methyladenosine(37) in tRNA1(Val) + S-adenosyl-L-homocysteine + H(+). Functionally, specifically methylates the adenine in position 37 of tRNA(1)(Val) (anticodon cmo5UAC). This chain is tRNA1(Val) (adenine(37)-N6)-methyltransferase, found in Mannheimia succiniciproducens (strain KCTC 0769BP / MBEL55E).